Reading from the N-terminus, the 285-residue chain is sn-2 palmitoyl-lipid 9-desaturase (285 aa).

Transmembrane regions (helical) follow at residues 20–40 (WINV…PWFF) and 44–64 (ALGL…CLGY). The Histidine box-1 signature appears at 65 to 70 (HRLLSH). The helical transmembrane segment at 81 to 101 (YAIALIGALALQGGPIFWVGG) threads the bilayer. Residues 102-106 (HRQHH) carry the Histidine box-2 motif. Residues 169 to 189 (IPFALLLYVLGGWPFVFYGVF) form a helical membrane-spanning segment. The Histidine box-3 motif lies at 239-243 (HHTYP).

The protein belongs to the fatty acid desaturase type 2 family. It depends on Fe(2+) as a cofactor.

Its subcellular location is the membrane. The enzyme catalyses a 1-acyl-2-hexadecanoyl-glycerolipid + 2 reduced [2Fe-2S]-[ferredoxin] + O2 + 2 H(+) = a 1-acyl-2-[(9Z)-hexadecenoyl]-glycerolipid + 2 oxidized [2Fe-2S]-[ferredoxin] + 2 H2O. It participates in lipid metabolism; fatty acid biosynthesis. Desaturase involved in fatty acid biosynthesis. Introduces a double bond at carbon 9 of palmitoyl groups (16:0) attached to the sn-2 position of the glycerol moiety of membrane glycerolipids. In Nostoc sp. (strain 36), this protein is sn-2 palmitoyl-lipid 9-desaturase.